Consider the following 31-residue polypeptide: SISCGESCAMISFCFTEVIGCSCKNKVCYLN.

The segment at residues 1–31 is a cross-link (cyclopeptide (Ser-Asn)); the sequence is SISCGESCAMISFCFTEVIGCSCKNKVCYLN. Cystine bridges form between Cys4–Cys21, Cys8–Cys23, and Cys14–Cys28.

Post-translationally, this is a cyclic peptide. In terms of tissue distribution, expressed in leaves.

In terms of biological role, probably participates in a plant defense mechanism. Has anti-human immunodeficiency virus activity. The chain is Leaf cyclotide 1 from Viola hederacea (Australian violet).